The primary structure comprises 185 residues: MINDIKKDAETRMEKCVEAFRNHISKIRTGRASPSILDGIMVDYYGSATPLRQLASVTVEDSRTLKINVFDRSIGAAVEKAIMTSDLGLNPSSAGSDIRVPLPALTEERRKDLIKVVRGEAEQGRVSVRNVRRDANDKLKALLKDKEISEDDDRRAQEDVQKMTDIFIKKVDAALADKETELMDF.

The protein belongs to the RRF family.

It is found in the cytoplasm. Responsible for the release of ribosomes from messenger RNA at the termination of protein biosynthesis. May increase the efficiency of translation by recycling ribosomes from one round of translation to another. The chain is Ribosome-recycling factor from Erwinia tasmaniensis (strain DSM 17950 / CFBP 7177 / CIP 109463 / NCPPB 4357 / Et1/99).